A 423-amino-acid chain; its full sequence is MYRSCVVRARKRTCVEPWVIGIISFLSLIVLAVCIGLTVHYVRYNHRRTYNYYSTLSFTSDKLYSEFGREASKNFTEMSQRIETMVKHAFHKSPLRGQLVKAHIIKFSKEDDGVLAHMLLIFRIRSTEDPETVHKIIEYVLHEKLKYATGPPNVDPESVKIKKINKTESDNYFNHCCGTRRNKSTVQTSVRIVGGTPVEEEEWPWQSSLRWDGSHRCGATLINNTWLVTAAHCFRTHKDPSRWSATFGATLQPRKLTTGIRRIIVHEKYKYPSHDYDIALAELSKPVPCTNAVHKVCLPDANHEFQPGQRMFVTGFGALKNDGFTQNNLRQVQVDYIDTQTCNQPQSYNGAITPRMLCAGFLKGEKDACQGDSGGPLVTADVRDIWYLAGVVSWGDECGQPNKPGVYTRVTAFRHWIASNTGI.

Over 1–18 the chain is Cytoplasmic; it reads MYRSCVVRARKRTCVEPW. A helical; Signal-anchor for type II membrane protein transmembrane segment spans residues 19 to 39; that stretch reads VIGIISFLSLIVLAVCIGLTV. The Extracellular segment spans residues 40-423; it reads HYVRYNHRRT…RHWIASNTGI (384 aa). The 119-residue stretch at 48 to 166 folds into the SEA domain; that stretch reads RTYNYYSTLS…ESVKIKKINK (119 aa). Asn-74, Asn-165, Asn-182, and Asn-223 each carry an N-linked (GlcNAc...) asparagine glycan. 4 disulfides stabilise this stretch: Cys-176–Cys-297, Cys-217–Cys-233, Cys-342–Cys-358, and Cys-369–Cys-398. The Peptidase S1 domain maps to 192–422; that stretch reads IVGGTPVEEE…FRHWIASNTG (231 aa). Residues His-232 and Asp-277 each act as charge relay system in the active site. Ser-373 serves as the catalytic Charge relay system.

Belongs to the peptidase S1 family. As to quaternary structure, forms a heterodimer with SERPINA5 and SERPINE1. N-glycosylated. As to expression, expressed in epidermal, oral and male reproductive tissues.

It is found in the cell membrane. The protein resides in the secreted. Its activity is regulated as follows. Inhibited by SERPINA5. Functionally, serine protease which possesses both gelatinolytic and caseinolytic activities. Shows a preference for Arg in the P1 position. The polypeptide is Transmembrane protease serine 11E (Tmprss11e) (Mus musculus (Mouse)).